The primary structure comprises 211 residues: Mitotic spindle assembly checkpoint protein MAD2B (211 aa).

The HORMA domain occupies 13–203 (QVVADVLCEF…SDILKMQLYV (191 aa)). Positions 21–155 (EFLEVAVHLI…FTVLVHTREA (135 aa)) are mediates interaction with REV1 and REV3L and homodimerization.

In terms of assembly, homooligomer. Heterodimer with REV3L. This dimer forms the minimal DNA polymerase zeta complex (Pol-zeta2), with REV3L bearing DNA polymerase catalytic activity, although its activity is very low in this context. Component of the tetrameric Pol-zeta complex (Pol-zeta4), which consists of REV3L, MAD2L2, POLD2 and POLD3; Pol-zeta4 is the fully active form of DNA polymerase zeta. Component of the shieldin complex, consisting of SHLD1, SHLD2, SHLD3 and MAD2L2/REV7. Within the complex, SHLD2 forms a scaffold which interacts with a SHLD3-MAD2L2 subcomplex via its N-terminus, and with SHLD1 via its C-terminus. Interacts with REV1. Interacts with ADAM9. Interacts with CHAMP1. Interacts with FZR1 (in complex with the anaphase promoting complex APC). May interact with CDC20. Interacts with RAN. Interacts with ELK1; the interaction is direct and recruits MAD2L2 to ELK1-specific promoters. May interact with the JNK kinases MAPK8 and/or MAPK9 to stimulate ELK1 phosphorylation and transcriptional activity upon DNA damage. Interacts with TCF7L2; prevents its binding to promoters and negatively modulates its transcriptional activity. Interacts with YY1AP1. Interacts with PRCC; the interaction is direct. Interacts with POGZ. Interacts with ASTE1.

Its subcellular location is the nucleus. The protein resides in the cytoplasm. It is found in the cytoskeleton. The protein localises to the spindle. Adapter protein able to interact with different proteins and involved in different biological processes. Mediates the interaction between the error-prone DNA polymerase zeta catalytic subunit REV3L and the inserter polymerase REV1, thereby mediating the second polymerase switching in translesion DNA synthesis. Translesion DNA synthesis releases the replication blockade of replicative polymerases, stalled in presence of DNA lesions. Component of the shieldin complex, which plays an important role in repair of DNA double-stranded breaks (DSBs). During G1 and S phase of the cell cycle, the complex functions downstream of TP53BP1 to promote non-homologous end joining (NHEJ) and suppress DNA end resection. Mediates various NHEJ-dependent processes including immunoglobulin class-switch recombination, and fusion of unprotected telomeres. May also regulate another aspect of cellular response to DNA damage through regulation of the JNK-mediated phosphorylation and activation of the transcriptional activator ELK1. Inhibits the FZR1- and probably CDC20-mediated activation of the anaphase promoting complex APC thereby regulating progression through the cell cycle. Regulates TCF7L2-mediated gene transcription and may play a role in epithelial-mesenchymal transdifferentiation. This is Mitotic spindle assembly checkpoint protein MAD2B (MAD2L2) from Bos taurus (Bovine).